The sequence spans 385 residues: Selenoprotein P (385 aa).

Positions 1–19 (MWRSLGLALALCLLPYGGA) are cleaved as a signal peptide. Selenocysteine 59 is a non-standard amino acid (selenocysteine). Residues 59-62 (UYLC) constitute a cross-link (cysteinyl-selenocysteine (Sec-Cys); in isoform Se-P1). Asparagine 83, asparagine 174, and asparagine 188 each carry an N-linked (GlcNAc...) asparagine glycan. Disulfide bonds link cysteine 168/cysteine 186 and cysteine 172/cysteine 175. The disordered stretch occupies residues 196 to 262 (KTTEPSEEHN…KGQHRQGHLE (67 aa)). Basic residues predominate over residues 243–258 (LHHHHHHHKHKGQHRQ). Residue selenocysteine 264 is a non-standard amino acid, selenocysteine. The residue at position 269 (serine 269) is a Phosphoserine. Residues selenocysteine 282, selenocysteine 323, selenocysteine 335, and selenocysteine 357 are each a non-standard amino acid (selenocysteine). The tract at residues 357–385 (UHSQHVSPTEASPNUSUNNKTKKUKUNLN) is disordered. A compositionally biased stretch (polar residues) spans 360 to 369 (QHVSPTEASP). Threonine 365 is a glycosylation site (O-linked (Hex...) threonine; partial). Residues selenocysteine 371, selenocysteine 373, selenocysteine 380, and selenocysteine 382 are each a non-standard amino acid (selenocysteine). Basic residues predominate over residues 376–385 (KTKKUKUNLN).

The protein belongs to the selenoprotein P family. Isoform Se-P1 contains several disulfide bridges and a selenide-sulfide bond between Sec-59 and Cys-62. These bonds are speculated to serve as redox-active pairs. In terms of processing, phosphorylation sites are present in the extracellular medium. Widely expressed, mainly by the liver. Secreted in plasma.

The protein resides in the secreted. Might be responsible for some of the extracellular antioxidant defense properties of selenium or might be involved in the transport of selenium. May supply selenium to tissues such as brain and testis. In Rattus norvegicus (Rat), this protein is Selenoprotein P.